Here is a 140-residue protein sequence, read N- to C-terminus: Calcitonin (140 aa).

A signal peptide spans 1–25 (MGFWKFSPFLPLSILVLYQVGIIQA). A propeptide spanning residues 26 to 81 (APFRSALESLPDPAVLPEEESRLLLAALVKDYVQMKVRALEQEQETGGASLDSPRA) is cleaved from the precursor. Cysteine 84 and cysteine 90 are joined by a disulfide. Proline 115 bears the Proline amide mark. Positions 120–140 (VMARGLERDHGPHIGTSQDAY) are excised as a propeptide.

The protein belongs to the calcitonin family.

It is found in the secreted. In terms of biological role, calcitonin is a peptide hormone that causes a rapid but short-lived drop in the level of calcium and phosphate in blood by promoting the incorporation of those ions in the bones. Calcitonin function is mediated by the calcitonin receptor/CALCR and the CALCR-RAMP2 (AMYR2) receptor complex. The chain is Calcitonin (CALCA) from Equus caballus (Horse).